Here is a 312-residue protein sequence, read N- to C-terminus: Putative ring-cleaving dioxygenase MhqO (312 aa).

VOC domains lie at 7–131 (GIHH…IVER) and 152–269 (GFGG…IATD). 3 residues coordinate Fe cation: His10, His217, and Glu265.

Belongs to the extradiol ring-cleavage dioxygenase family. Requires Fe(2+) as cofactor.

It localises to the cytoplasm. Functionally, putative ring-cleavage dioxygenase that may contribute to the degradation of aromatic compounds. The protein is Putative ring-cleaving dioxygenase MhqO (mhqO) of Bacillus subtilis (strain 168).